The following is a 155-amino-acid chain: SsrA-binding protein (155 aa).

A disordered region spans residues 136 to 155 (REDLKRRQDQRDIQRAMKSY).

The protein belongs to the SmpB family.

The protein resides in the cytoplasm. In terms of biological role, required for rescue of stalled ribosomes mediated by trans-translation. Binds to transfer-messenger RNA (tmRNA), required for stable association of tmRNA with ribosomes. tmRNA and SmpB together mimic tRNA shape, replacing the anticodon stem-loop with SmpB. tmRNA is encoded by the ssrA gene; the 2 termini fold to resemble tRNA(Ala) and it encodes a 'tag peptide', a short internal open reading frame. During trans-translation Ala-aminoacylated tmRNA acts like a tRNA, entering the A-site of stalled ribosomes, displacing the stalled mRNA. The ribosome then switches to translate the ORF on the tmRNA; the nascent peptide is terminated with the 'tag peptide' encoded by the tmRNA and targeted for degradation. The ribosome is freed to recommence translation, which seems to be the essential function of trans-translation. This Nostoc punctiforme (strain ATCC 29133 / PCC 73102) protein is SsrA-binding protein.